We begin with the raw amino-acid sequence, 274 residues long: Eukaryotic translation initiation factor 3 subunit J (274 aa).

Disordered regions lie at residues 1–120 (MSGK…DLKH) and 227–246 (EEKAAEKGGKKSKAAKTKTS). The segment covering 30 to 50 (DEEGNESDVLDSWDAAEDSEV) has biased composition (acidic residues). Residues 46–112 (EDSEVEREKA…AERRERLRRE (67 aa)) adopt a coiled-coil conformation. Composition is skewed to basic and acidic residues over residues 51–67 (EREKAKKAAEAKAKAEA) and 79–92 (RIAERQAERARQLA). The span at 93-102 (EDSDAEEETE) shows a compositional bias: acidic residues. The segment covering 103–120 (AERRERLRREQKESDLKH) has biased composition (basic and acidic residues).

This sequence belongs to the eIF-3 subunit J family. As to quaternary structure, component of the eukaryotic translation initiation factor 3 (eIF-3) complex.

Its subcellular location is the cytoplasm. Its function is as follows. Component of the eukaryotic translation initiation factor 3 (eIF-3) complex, which is involved in protein synthesis of a specialized repertoire of mRNAs and, together with other initiation factors, stimulates binding of mRNA and methionyl-tRNAi to the 40S ribosome. The eIF-3 complex specifically targets and initiates translation of a subset of mRNAs involved in cell proliferation. This Neurospora crassa (strain ATCC 24698 / 74-OR23-1A / CBS 708.71 / DSM 1257 / FGSC 987) protein is Eukaryotic translation initiation factor 3 subunit J (hcr-1).